Reading from the N-terminus, the 405-residue chain is Pentatricopeptide repeat-containing protein At1g11630, mitochondrial (405 aa).

Residues 1 to 72 (MAFLFRIRTS…RSTSLSPDYH (72 aa)) constitute a mitochondrion transit peptide. PPR repeat units lie at residues 74–108 (DRII…QPDP), 110–144 (SESF…EIPR), 145–180 (TVKS…GIEP), 181–215 (DLET…WIKP), 216–250 (TAAS…GVHV), 251–285 (GVAT…RMRP), 286–320 (NSVT…GYKP), 321–355 (DSEC…NWVP), and 356–386 (SFSV…VKEK).

The protein belongs to the PPR family. P subfamily.

The protein resides in the mitochondrion. The sequence is that of Pentatricopeptide repeat-containing protein At1g11630, mitochondrial from Arabidopsis thaliana (Mouse-ear cress).